The following is a 69-amino-acid chain: U2-agatoxin-Ao1w (69 aa).

The first 20 residues, 1 to 20, serve as a signal peptide directing secretion; that stretch reads MRAIISLLLISAMVFSMIEA. Positions 21–34 are excised as a propeptide; that stretch reads VPVEEGLQLFEGER. Intrachain disulfides connect C37-C53, C44-C58, and C52-C68.

It belongs to the neurotoxin 01 (U2-agtx) family. Expressed by the venom gland.

It localises to the secreted. Insect active toxin causing rapid but reversible paralysis in crickets. No activity shown in mammals. Does not show effect on mammalian voltage-gated calcium channels. The sequence is that of U2-agatoxin-Ao1w from Agelena orientalis (Funnel-web spider).